Reading from the N-terminus, the 95-residue chain is Acylphosphatase 2 (95 aa).

The Acylphosphatase-like domain occupies 6 to 93 (RVIVTVQGRV…PLPPGFEVRP (88 aa)). Active-site residues include Arg-21 and Asn-39.

It belongs to the acylphosphatase family.

The catalysed reaction is an acyl phosphate + H2O = a carboxylate + phosphate + H(+). The polypeptide is Acylphosphatase 2 (acyP2) (Ralstonia nicotianae (strain ATCC BAA-1114 / GMI1000) (Ralstonia solanacearum)).